Reading from the N-terminus, the 606-residue chain is Gamma-aminobutyric acid receptor subunit beta (606 aa).

Positions 1-44 (MSDSKMDKLARMAPLPRTPLLTIWLAINMALIAQETGHKRIHTV) are cleaved as a signal peptide. At 45 to 268 (QAATGGGSML…CEIQFVRSMG (224 aa)) the chain is on the extracellular side. N58 carries N-linked (GlcNAc...) asparagine glycosylation. A disulfide bridge links C185 with C199. N-linked (GlcNAc...) asparagine glycosylation is present at N253. The next 3 membrane-spanning stretches (helical) occupy residues 269-291 (YYLI…SFWL), 297-316 (PARV…LMSS), and 333-356 (YLGT…YMAK). Over 357-568 (RIQMRKQRFM…LGITPSDIDK (212 aa)) the chain is Cytoplasmic. Disordered stretches follow at residues 376 to 451 (KQQL…VSNR) and 482 to 542 (HDPK…AAVP). Residues 381-395 (GANQQQANPNPNANV) show a composition bias toward low complexity. Residues 396-425 (GGPGGVGVGPGGPGGPGGGVNVGVGMGMGP) are compositionally biased toward gly residues. The span at 430–443 (GHGHHAHSHGHPHA) shows a compositional bias: basic residues. A compositionally biased stretch (gly residues) spans 499 to 536 (GGRGGPQSHGPGPGQGGGPPGGGGGGGGGGGPPEGGGD). Residues 569-590 (YSRIVFPVCFVCFNLMYWIIYL) traverse the membrane as a helical segment.

This sequence belongs to the ligand-gated ion channel (TC 1.A.9) family. Gamma-aminobutyric acid receptor (TC 1.A.9.5) subfamily.

It localises to the postsynaptic cell membrane. The protein resides in the cell membrane. Its function is as follows. GABA, an inhibitory neurotransmitter, mediates neuronal inhibition by binding to the GABA receptor and opening an integral chloride channel. The chain is Gamma-aminobutyric acid receptor subunit beta (Rdl) from Drosophila simulans (Fruit fly).